Here is a 397-residue protein sequence, read N- to C-terminus: MNIHEYQAKALLRSYGAPVSDGRVVLKADEAKSAAGELGGPLWVVKAQIHAGGRGKGKFKEPEAGEKGGVRLAKSVGEAAELAKQMLGRTLVTHQTGPAGKQVNRIYIEEGSDIARELYLALLVDRGTSRISFVVSTEGGMDIEEVAASTPEKIVSFSVDPASGLSDFHGRRVAFALGLEGAQVKQCVQLVKNLYRAFVEKDMEMLEINPLIVMTDGNLKVLDAKVGFDNNALYRQSDVMALRDETEEDPKELAASKFDLNYIALDGEIGCMVNGAGLAMATMDIIKLYGAEPANFLDVGGGATKEKVTEAFKIITSDPNVKGILVNIFGGIMRCDIIAEGIIAAVKEVGLQVPLVVRLEGTNVEKGKEIIANSGLNVIAGDNLSDAAQKIVKAVKG.

Residues 9–254 (KALLRSYGAP…ETEEDPKELA (246 aa)) form the ATP-grasp domain. ATP contacts are provided by residues Lys-46, 53 to 55 (GRG), Glu-109, Ser-112, and Glu-117. Mg(2+) is bound by residues Asn-209 and Asp-223. Substrate is bound by residues Asn-274 and 331 to 333 (GIM).

Belongs to the succinate/malate CoA ligase beta subunit family. Heterotetramer of two alpha and two beta subunits. Mg(2+) serves as cofactor.

The catalysed reaction is succinate + ATP + CoA = succinyl-CoA + ADP + phosphate. It catalyses the reaction GTP + succinate + CoA = succinyl-CoA + GDP + phosphate. It functions in the pathway carbohydrate metabolism; tricarboxylic acid cycle; succinate from succinyl-CoA (ligase route): step 1/1. Functionally, succinyl-CoA synthetase functions in the citric acid cycle (TCA), coupling the hydrolysis of succinyl-CoA to the synthesis of either ATP or GTP and thus represents the only step of substrate-level phosphorylation in the TCA. The beta subunit provides nucleotide specificity of the enzyme and binds the substrate succinate, while the binding sites for coenzyme A and phosphate are found in the alpha subunit. In Cereibacter sphaeroides (strain ATCC 17029 / ATH 2.4.9) (Rhodobacter sphaeroides), this protein is Succinate--CoA ligase [ADP-forming] subunit beta.